A 363-amino-acid polypeptide reads, in one-letter code: Ribosome-binding ATPase YchF (363 aa).

The region spanning 3 to 257 is the OBG-type G domain; sequence FKCGFVGLPN…VSAYDHLSLK (255 aa). An ATP-binding site is contributed by 12 to 17; it reads NVGKST. S16 and T36 together coordinate Mg(2+). In terms of domain architecture, TGS spans 278 to 361; the sequence is NLITFFTAGK…CDGDIIHVLY (84 aa).

It belongs to the TRAFAC class OBG-HflX-like GTPase superfamily. OBG GTPase family. YchF/OLA1 subfamily. Mg(2+) is required as a cofactor.

Its function is as follows. ATPase that binds to both the 70S ribosome and the 50S ribosomal subunit in a nucleotide-independent manner. The sequence is that of Ribosome-binding ATPase YchF from Buchnera aphidicola subsp. Baizongia pistaciae (strain Bp).